We begin with the raw amino-acid sequence, 157 residues long: WPP domain-containing protein 3 (157 aa).

Over residues 1 to 20 (MAETADTINTTVSTPQPQLE) the composition is skewed to polar residues. The segment at 1–41 (MAETADTINTTVSTPQPQLESRSDETSCLQKHRSDATSEVT) is disordered. Over residues 32–41 (HRSDATSEVT) the composition is skewed to basic and acidic residues. Residues 37–138 (TSEVTKEEKS…IESAEVRFKA (102 aa)) are WPP; degenerate.

Expressed in roots, stems and leaves.

Its subcellular location is the cytoplasm. It localises to the nucleus. Its function is as follows. Regulates the mitotic activity in roots. This chain is WPP domain-containing protein 3 (WPP3), found in Arabidopsis thaliana (Mouse-ear cress).